The sequence spans 486 residues: Stretch-activated cation channel yam8 (486 aa).

The signal sequence occupies residues 1 to 24 (MFFFSTHLILKILFFWSITRNIFG). Residues 25–464 (ATYTSLLLNN…PGVEFYESGS (440 aa)) are Extracellular-facing. 5 N-linked (GlcNAc...) asparagine glycosylation sites follow: N33, N49, N59, N82, and N93. A helical membrane pass occupies residues 465-485 (ALLNISWRTFFISLIFWILFV). Position 486 (E486) is a topological domain, cytoplasmic.

It is found in the cell membrane. Calcium-permeable, cation-selective stretch-activated channel (SAC) that functions together with CCH1 to mediate calcium entry into cells. Required during mating. The chain is Stretch-activated cation channel yam8 from Schizosaccharomyces pombe (strain 972 / ATCC 24843) (Fission yeast).